Consider the following 400-residue polypeptide: Exodeoxyribonuclease 7 large subunit (400 aa).

This sequence belongs to the XseA family. Heterooligomer composed of large and small subunits.

The protein resides in the cytoplasm. The catalysed reaction is Exonucleolytic cleavage in either 5'- to 3'- or 3'- to 5'-direction to yield nucleoside 5'-phosphates.. Bidirectionally degrades single-stranded DNA into large acid-insoluble oligonucleotides, which are then degraded further into small acid-soluble oligonucleotides. This is Exodeoxyribonuclease 7 large subunit from Clostridium kluyveri (strain NBRC 12016).